The sequence spans 360 residues: Ferredoxin--NADP reductase (360 aa).

Residues Thr-25, Glu-44, Gln-52, Tyr-57, Val-97, Phe-132, Asp-298, and Ser-339 each contribute to the FAD site.

It belongs to the ferredoxin--NADP reductase type 2 family. Homodimer. It depends on FAD as a cofactor.

The enzyme catalyses 2 reduced [2Fe-2S]-[ferredoxin] + NADP(+) + H(+) = 2 oxidized [2Fe-2S]-[ferredoxin] + NADPH. This is Ferredoxin--NADP reductase from Chlorobaculum tepidum (strain ATCC 49652 / DSM 12025 / NBRC 103806 / TLS) (Chlorobium tepidum).